Consider the following 886-residue polypeptide: MNSVNNIRSTFLDYFHRNGHEVLSSSPLVPRNDPTLMFTNAGMVDFKNVFTGLEKHSYNRATTAQKCVRAGGKHNDLDNVGYTARHHTFFEMLGNFSFSNYFKEEAIFYAWNLLTKEFCLSKDKLLVTVYHDDDVAAGLWRKISGLSEEKIIRIATNDNFWMMGDTGPCGPCSEIFYDHGDKIWGGPPGSADEDGDRFIEIWNLVFMQYEQLSKEKRIELPQPSIDTGMGLERIAAVLQGVHDNYDIDLFRTLIHASQEIIGVKATGDFFASHRVIADHLRSSAFLIADGIMPSNEGRGYVLRRIMRRAMRHAHLLGSKDLLMWRLVPVLISEMGQAYPELVRAESLISEILKLEETRFRKTLERGLGLLNEASTHLEEGDYFNGEVAFKLYDTYGFPLDLTQDALRRRGISVDVDAFDKAMKRQKAEARANWSGSGDCVTETVWFSIRDQVGATEFLGYETEKAEGIITALIRDGEVVDHIDLGQKAMIVVNQTPFYGESGGQVGDSGIISGANFIFEVHDTQKKGDNVFIHIGEIKTGQAKKHDCVELIVDSARRRKIRANHSATHLLHESLRQTLGSHVVQKGSFVSPDRLRFDFSHPKSISSEELKKIEDLANDIVLQNSKVTTRLMAIDDAIAEGAMALFGEKYGDEVRVISMGNNLEQTGSKKWWSIELCGGTHVQRTGDIGLIHIISETSVAAGVRRIEALTATAARLYLHGQDRRVYEIAGLLKTSPADVQERVQTLLDERRKLEKELNDSRKKIALNGGSVNSQGDIQTINGISFMGGVVSNILPKDLKALVDSGKKKIGSGVVAFISVSEDGKGSAVVGVTDDLTDTLNAVDLVRIISVTLGGQGGGGRRDMAQAGGSEGGKADEALVALKDSLKG.

Residues H564, H568, C676, and H680 each contribute to the Zn(2+) site.

The protein belongs to the class-II aminoacyl-tRNA synthetase family. The cofactor is Zn(2+).

It localises to the cytoplasm. The catalysed reaction is tRNA(Ala) + L-alanine + ATP = L-alanyl-tRNA(Ala) + AMP + diphosphate. Catalyzes the attachment of alanine to tRNA(Ala) in a two-step reaction: alanine is first activated by ATP to form Ala-AMP and then transferred to the acceptor end of tRNA(Ala). Also edits incorrectly charged Ser-tRNA(Ala) and Gly-tRNA(Ala) via its editing domain. The chain is Alanine--tRNA ligase from Bartonella bacilliformis.